A 316-amino-acid chain; its full sequence is Ornithine carbamoyltransferase (316 aa).

Residues 57-60 (STRT), Q84, R108, and 135-138 (HPCQ) contribute to the carbamoyl phosphate site. L-ornithine-binding positions include N166, D230, and 234–235 (SM). Carbamoyl phosphate contacts are provided by residues 269-270 (CL) and R297.

This sequence belongs to the aspartate/ornithine carbamoyltransferase superfamily. OTCase family.

The protein resides in the cytoplasm. The enzyme catalyses carbamoyl phosphate + L-ornithine = L-citrulline + phosphate + H(+). It functions in the pathway amino-acid biosynthesis; L-arginine biosynthesis; L-arginine from L-ornithine and carbamoyl phosphate: step 1/3. Reversibly catalyzes the transfer of the carbamoyl group from carbamoyl phosphate (CP) to the N(epsilon) atom of ornithine (ORN) to produce L-citrulline. This Bacillus cereus (strain ZK / E33L) protein is Ornithine carbamoyltransferase.